Consider the following 678-residue polypeptide: SPS-sensor component PTR3 (678 aa).

Disordered stretches follow at residues 111 to 158 (TGQG…SDPT) and 179 to 211 (ANTEVGSDHPLTTGTTRDQEEHTTKENYSSSLL). Residues 127–144 (TSPSSSSLSLTPSRSSST) are compositionally biased toward low complexity. Residues 149 to 158 (ADNKTLSDPT) show a composition bias toward basic and acidic residues. Polar residues predominate over residues 179 to 194 (ANTEVGSDHPLTTGTT).

Homodimer. Component of the plasma membrane SPS (SSY1-PTR3-SSY5) amino acid sensor complex. Interacts directly with SSY1 and SSY5. Post-translationally, hyperphosphorylated in response to extracellular amino acids and dependent on the amino acid sensor component SSY1. Phosphorylation is positively regulated by casein kinases YCK1 and YCK2, and negatively regulated by phosphatase PP2A regulatory subunit RTS1.

The protein resides in the cell membrane. Component of the SPS-sensor system, which regulates the expression of several amino acid-metabolizing enzymes and amino acid- and peptide-permeases in response to extracellular amino acid levels by controlling the activity of two transcription factors, STP1 and STP2. This chain is SPS-sensor component PTR3 (PTR3), found in Saccharomyces cerevisiae (strain ATCC 204508 / S288c) (Baker's yeast).